The sequence spans 166 residues: Large ribosomal subunit protein uL10 (166 aa).

This sequence belongs to the universal ribosomal protein uL10 family. As to quaternary structure, part of the ribosomal stalk of the 50S ribosomal subunit. The N-terminus interacts with L11 and the large rRNA to form the base of the stalk. The C-terminus forms an elongated spine to which L12 dimers bind in a sequential fashion forming a multimeric L10(L12)X complex.

Forms part of the ribosomal stalk, playing a central role in the interaction of the ribosome with GTP-bound translation factors. This chain is Large ribosomal subunit protein uL10, found in Shewanella denitrificans (strain OS217 / ATCC BAA-1090 / DSM 15013).